A 179-amino-acid polypeptide reads, in one-letter code: Large ribosomal subunit protein uL5 (179 aa).

Belongs to the universal ribosomal protein uL5 family. As to quaternary structure, part of the 50S ribosomal subunit; part of the 5S rRNA/L5/L18/L25 subcomplex. Contacts the 5S rRNA and the P site tRNA. Forms a bridge to the 30S subunit in the 70S ribosome.

In terms of biological role, this is one of the proteins that bind and probably mediate the attachment of the 5S RNA into the large ribosomal subunit, where it forms part of the central protuberance. In the 70S ribosome it contacts protein S13 of the 30S subunit (bridge B1b), connecting the 2 subunits; this bridge is implicated in subunit movement. Contacts the P site tRNA; the 5S rRNA and some of its associated proteins might help stabilize positioning of ribosome-bound tRNAs. This is Large ribosomal subunit protein uL5 from Buchnera aphidicola subsp. Acyrthosiphon kondoi (Acyrthosiphon kondoi symbiotic bacterium).